Reading from the N-terminus, the 631-residue chain is MDSVNNLCRHYEEKVRPCIDLIDTLRALGVEQDLALPAIAVIGDQSSGKSSVLEALSGVALPRGSGIVTRCPLVLKLRKLKEGEEWRGKVSYDDIEVELSDPSEVEEAINKGQNFIAGVGLGISDKLISLDVSSPNVPDLTLIDLPGITRVAVGNQPADIGRQIKRLIKTYIQKQETINLVVVPSNVDIATTEALSMAQEVDPEGDRTIGVLTKPDLVDRGAEGKVLDVMRNLVYPLKKGYMIVKCRGQQDIQEQLSLTEAFQKEQVFFKDHSYFSILLEDGKATVPCLAERLTEELTSHICKSLPLLEDQINSSHQSASEELQKYGADIPEDDRTRMSFLVNKISAFNRNIMNLIQAQETVSEGDSRLFTKLRNEFLAWDDHIEEYFKKDSPEVQSKMKEFENQYRGRELPGFVDYKAFESIIKKRVKALEESAVNMLRRVTKMVQTAFVKILSNDFGDFLNLCCTAKSKIKEIRLNQEKEAENLIRLHFQMEQIVYCQDQVYKETLKTIREKEAEKEKTKALINPATFQNNSQFPQKGLTTTEMTQHLKAYYQECRRNIGRQIPLIIQYFILKTFGEEIEKMMLQLLQDTSKCSWFLEEQSDTREKKKFLKRRLLRLDEARQKLAKFSD.

One can recognise a Dynamin-type G domain in the interval Asp33–Pro306. Residues Gly43–Ser50 form a G1 motif region. Gly43 to Ser50 lines the GTP pocket. The G2 motif stretch occupies residues Val68 to Arg70. Positions Asp144 to Gly147 are G3 motif. GTP is bound by residues Asp144–Ile148 and Thr213–Asp216. The segment at Thr213–Asp216 is G4 motif. The G5 motif stretch occupies residues Lys245–Gly248. The interval Leu307–Glu332 is bundle signaling element (BSE). A middle domain region spans residues Glu332 to Cys499. Residues Asp333–Glu601 are stalk. The critical for lipid-binding stretch occupies residues Lys520 to Lys522. Positions Thr543 to Asp631 constitute a GED domain.

It belongs to the TRAFAC class dynamin-like GTPase superfamily. Dynamin/Fzo/YdjA family. Homooligomer. Oligomerizes into multimeric filamentous or ring-like structures by virtue of its stalk domain. Oligomerization is critical for GTPase activity, protein stability, and recognition of viral target structures. Interacts with TRPC1, TRPC3, TRPC4, TRPC5, TRPC6 and TRPC7. Interacts with HSPA5. Interacts with TUBB/TUBB5. Interacts with DDX39A and DDX39B. ISGylated.

The protein resides in the cytoplasm. It is found in the nucleus. It localises to the endoplasmic reticulum membrane. The protein localises to the perinuclear region. Interferon-induced dynamin-like GTPase with antiviral activity against influenza A virus, (IAV), influenza B virus (IBV) and Thogoto virus (THOV). Inhibits FLUAV by interfering with the process of primary transcription, probably by affecting the viral polymerase function. The chain is Interferon-induced GTP-binding protein Mx1 (Mx1) from Mus musculus (Mouse).